The chain runs to 681 residues: T-box brain protein 1 (681 aa).

Disordered stretches follow at residues 43–83 and 108–127; these read TDNL…RSKL and SQSSQPQSAATAPSAMFPYP. Positions 58-68 are enriched in polar residues; the sequence is GMTNQSDTDNF. A compositionally biased stretch (low complexity) spans 108 to 122; it reads SQSSQPQSAATAPSA. Positions 213 to 393 form a DNA-binding region, T-box; the sequence is LWLKFHRHQT…HNPFAKGFRD (181 aa). Thr-408 carries the phosphothreonine modification. Residue Ser-410 is modified to Phosphoserine. The disordered stretch occupies residues 447–483; it reads PGAGAGPGPGTDRSVPHTNGLLSPQQAEDPGAPSPQR. A compositionally biased stretch (polar residues) spans 462-472; it reads PHTNGLLSPQQ. Position 594 is a phosphoserine (Ser-594). The tract at residues 597–655 is disordered; sequence APAAEDAKPKDLSDSSWIETPSSIKSIDSSDSGIYEQAKRRRISPADTPVSESSSPLKS. A compositionally biased stretch (low complexity) spans 618 to 628; it reads SSIKSIDSSDS. Ser-640 is modified (phosphoserine).

As to quaternary structure, homodimer. Part of a complex containing CASK, TBR1 and TSPYL2; may modulate gene expression in response to neuronal synaptic activity. Forms homodimers. Interacts with FOXP2. Interacts with FOXP1. Interacts with BCL11A. Expressed in the developing and adult cortex. Expressed in the olfactory bulbs.

The protein localises to the nucleus. In terms of biological role, transcriptional repressor involved in multiple aspects of cortical development, including neuronal migration, laminar and areal identity, and axonal projection. As transcriptional repressor of FEZF2, it blocks the formation of the corticospinal (CS) tract from layer 6 projection neurons, thereby restricting the origin of CS axons specifically to layer 5 neurons. This chain is T-box brain protein 1 (Tbr1), found in Mus musculus (Mouse).